A 484-amino-acid polypeptide reads, in one-letter code: Hemogen (484 aa).

The segment covering 1-25 (MDLGKDQSHLKHHQTPDPHQEENHS) has biased composition (basic and acidic residues). Disordered stretches follow at residues 1 to 32 (MDLGKDQSHLKHHQTPDPHQEENHSPEVIGTW) and 44 to 91 (KAEV…PQPQ). The necessary for nuclear localization stretch occupies residues 7–87 (QSHLKHHQTP…RQQNTELKVE (81 aa)). Basic residues predominate over residues 61–79 (KKRKQQRTGKGNRRGRKRQ). A phosphoserine mark is found at Ser123, Ser159, Ser181, Ser188, and Ser201. Position 246 is a phosphothreonine (Thr246). Disordered regions lie at residues 265-290 (DVPKGYILDTDQNPAEPEEYNETDQG), 306-369 (EPKD…YSPE), and 386-471 (QETS…ILNE). A compositionally biased stretch (basic and acidic residues) spans 306 to 320 (EPKDLSTKTHQESAE). Ser349 and Ser353 each carry phosphoserine. Thr360 is subject to Phosphothreonine. Ser363 and Ser367 each carry phosphoserine. Composition is skewed to basic and acidic residues over residues 413-428 (YKNKDVPKECFPEPHQ), 438-447 (PKAHQEDAKD), and 454-463 (EMKEKPKEEP).

In terms of tissue distribution, expressed in hematopoietic precursor cells, thyroid and spermatids (at protein level). Expressed in bone marrow, testis, thymus. Expressed in prostate cancer and ovarian cancer. Also expressed in thymus and thyroid tumors, non-Hodgkin lymphoma, various leukemia cell lines, peripheral blood mononuclear cells (PBMCs) and bone marrow mononuclear cells (BMMCs) of patients with leukemia.

Its subcellular location is the nucleus. Regulates the proliferation and differentiation of hematopoietic cells. Overexpression block the TPA-induced megakaryocytic differentiation in the K562 cell model. May also prevent cell apoptosis through the activation of the nuclear factor-kappa B (NF-kB). The sequence is that of Hemogen (HEMGN) from Homo sapiens (Human).